A 310-amino-acid polypeptide reads, in one-letter code: O-acetylserine sulfhydrylase (310 aa).

K44 bears the N6-(pyridoxal phosphate)lysine mark. Residues N74, G178 to T182, and S266 each bind pyridoxal 5'-phosphate.

Belongs to the cysteine synthase/cystathionine beta-synthase family. As to quaternary structure, homodimer. It depends on pyridoxal 5'-phosphate as a cofactor.

The enzyme catalyses O-acetyl-L-serine + hydrogen sulfide = L-cysteine + acetate. It participates in amino-acid biosynthesis; L-cysteine biosynthesis; L-cysteine from L-serine: step 2/2. Functionally, catalyzes the conversion of O-acetylserine (OAS) to cysteine through the elimination of acetate and addition of hydrogen sulfide. The chain is O-acetylserine sulfhydrylase (cysK) from Mycobacterium bovis (strain ATCC BAA-935 / AF2122/97).